Here is a 177-residue protein sequence, read N- to C-terminus: Large ribosomal subunit protein uL6 (177 aa).

Belongs to the universal ribosomal protein uL6 family. As to quaternary structure, part of the 50S ribosomal subunit.

In terms of biological role, this protein binds to the 23S rRNA, and is important in its secondary structure. It is located near the subunit interface in the base of the L7/L12 stalk, and near the tRNA binding site of the peptidyltransferase center. This is Large ribosomal subunit protein uL6 from Bartonella henselae (strain ATCC 49882 / DSM 28221 / CCUG 30454 / Houston 1) (Rochalimaea henselae).